A 144-amino-acid chain; its full sequence is NADPH-dependent 7-cyano-7-deazaguanine reductase (144 aa).

Positions 1 to 21 (MSQSPIQNPTSDPNAQSVQET) are enriched in polar residues. Residues 1–27 (MSQSPIQNPTSDPNAQSVQETSESKYG) form a disordered region. The active-site Thioimide intermediate is Cys-61. Residue Asp-68 is the Proton donor of the active site. Residues 83–85 (VEL) and 102–103 (HE) contribute to the substrate site.

Belongs to the GTP cyclohydrolase I family. QueF type 1 subfamily.

The protein resides in the cytoplasm. The enzyme catalyses 7-aminomethyl-7-carbaguanine + 2 NADP(+) = 7-cyano-7-deazaguanine + 2 NADPH + 3 H(+). It functions in the pathway tRNA modification; tRNA-queuosine biosynthesis. In terms of biological role, catalyzes the NADPH-dependent reduction of 7-cyano-7-deazaguanine (preQ0) to 7-aminomethyl-7-deazaguanine (preQ1). The sequence is that of NADPH-dependent 7-cyano-7-deazaguanine reductase from Acaryochloris marina (strain MBIC 11017).